The sequence spans 276 residues: Large ribosomal subunit protein uL2 (276 aa).

Residues 212–276 (NRHRGIRPQT…KLIISRKKHK (65 aa)) are disordered. Positions 257 to 276 (YKTRKKKASDKLIISRKKHK) are enriched in basic residues.

This sequence belongs to the universal ribosomal protein uL2 family. In terms of assembly, part of the 50S ribosomal subunit. Forms a bridge to the 30S subunit in the 70S ribosome.

Its function is as follows. One of the primary rRNA binding proteins. Required for association of the 30S and 50S subunits to form the 70S ribosome, for tRNA binding and peptide bond formation. It has been suggested to have peptidyltransferase activity; this is somewhat controversial. Makes several contacts with the 16S rRNA in the 70S ribosome. The polypeptide is Large ribosomal subunit protein uL2 (Helicobacter acinonychis (strain Sheeba)).